A 368-amino-acid polypeptide reads, in one-letter code: Protein-glutamate methylesterase/protein-glutamine glutaminase (368 aa).

The 118-residue stretch at 9-126 folds into the Response regulatory domain; the sequence is KVLVVDDSAF…SINMKELKDE (118 aa). 4-aspartylphosphate is present on aspartate 60. A CheB-type methylesterase domain is found at 161-354; that stretch reads SVPARIAVAI…ETVVKAVEII (194 aa). Catalysis depends on residues serine 173, histidine 200, and aspartate 296.

Belongs to the CheB family. Post-translationally, phosphorylated by CheA. Phosphorylation of the N-terminal regulatory domain activates the methylesterase activity.

Its subcellular location is the cytoplasm. It catalyses the reaction [protein]-L-glutamate 5-O-methyl ester + H2O = L-glutamyl-[protein] + methanol + H(+). The enzyme catalyses L-glutaminyl-[protein] + H2O = L-glutamyl-[protein] + NH4(+). Its function is as follows. Involved in chemotaxis. Part of a chemotaxis signal transduction system that modulates chemotaxis in response to various stimuli. Catalyzes the demethylation of specific methylglutamate residues introduced into the chemoreceptors (methyl-accepting chemotaxis proteins or MCP) by CheR. Also mediates the irreversible deamidation of specific glutamine residues to glutamic acid. The sequence is that of Protein-glutamate methylesterase/protein-glutamine glutaminase from Pyrococcus horikoshii (strain ATCC 700860 / DSM 12428 / JCM 9974 / NBRC 100139 / OT-3).